The following is a 453-amino-acid chain: UDP-N-acetylmuramoylalanine--D-glutamate ligase (453 aa).

117-123 is an ATP binding site; that stretch reads GANGKST.

Belongs to the MurCDEF family.

The protein resides in the cytoplasm. The enzyme catalyses UDP-N-acetyl-alpha-D-muramoyl-L-alanine + D-glutamate + ATP = UDP-N-acetyl-alpha-D-muramoyl-L-alanyl-D-glutamate + ADP + phosphate + H(+). Its pathway is cell wall biogenesis; peptidoglycan biosynthesis. In terms of biological role, cell wall formation. Catalyzes the addition of glutamate to the nucleotide precursor UDP-N-acetylmuramoyl-L-alanine (UMA). The polypeptide is UDP-N-acetylmuramoylalanine--D-glutamate ligase (Methylobacillus flagellatus (strain ATCC 51484 / DSM 6875 / VKM B-1610 / KT)).